The following is a 98-amino-acid chain: Large ribosomal subunit protein uL23 (98 aa).

It belongs to the universal ribosomal protein uL23 family. In terms of assembly, part of the 50S ribosomal subunit. Contacts protein L29, and trigger factor when it is bound to the ribosome.

Functionally, one of the early assembly proteins it binds 23S rRNA. One of the proteins that surrounds the polypeptide exit tunnel on the outside of the ribosome. Forms the main docking site for trigger factor binding to the ribosome. This chain is Large ribosomal subunit protein uL23, found in Rickettsia rickettsii (strain Iowa).